Consider the following 310-residue polypeptide: Porphobilinogen deaminase (310 aa).

Residue Cys-242 is modified to S-(dipyrrolylmethanemethyl)cysteine.

This sequence belongs to the HMBS family. In terms of assembly, monomer. Dipyrromethane serves as cofactor.

It carries out the reaction 4 porphobilinogen + H2O = hydroxymethylbilane + 4 NH4(+). It functions in the pathway porphyrin-containing compound metabolism; protoporphyrin-IX biosynthesis; coproporphyrinogen-III from 5-aminolevulinate: step 2/4. Functionally, tetrapolymerization of the monopyrrole PBG into the hydroxymethylbilane pre-uroporphyrinogen in several discrete steps. The protein is Porphobilinogen deaminase of Shewanella baltica (strain OS195).